Consider the following 452-residue polypeptide: Ribosome biogenesis protein YTM1 (452 aa).

The ubiquitin-like (UBL) domain stretch occupies residues 17–98 (IVSQPVVFTT…EETLEIEYIE (82 aa)). WD repeat units lie at residues 110-148 (PHEDWVSSVSCQLPRYFLTASYDGNLRAFDLSKNLTASI), 150-195 (AHPA…NPMA), and 208-247 (LHTAPVSSISANAAGTHVLTASWDGLIGYWDATVPSTDEV). The interval 245-269 (DEVPEPALNERDRSKKRRRVEEGEV) is disordered. Basic and acidic residues predominate over residues 252–269 (LNERDRSKKRRRVEEGEV). WD repeat units follow at residues 282–322 (SHTA…CSHT), 325–364 (ASEKPFLDMALTPDGNSALATSTDRSMTLYDLRSSTTILT), 371–411 (MHPS…SAMA), and 418–452 (GSGQKVLSVDWKRGIVGVGGERGLEMWKVGEEQKV).

It belongs to the WD repeat WDR12/YTM1 family. Component of the NOP7 complex, composed of ERB1, NOP7 and YTM1. The complex is held together by ERB1, which interacts with NOP7 via its N-terminal domain and with YTM1 via a high-affinity interaction between the seven-bladed beta-propeller domains of the 2 proteins. The NOP7 complex associates with the 66S pre-ribosome. Interacts (via UBL domain) with MDN1 (via VWFA/MIDAS domain).

It is found in the nucleus. It localises to the nucleolus. Its subcellular location is the nucleoplasm. In terms of biological role, component of the NOP7 complex, which is required for maturation of the 25S and 5.8S ribosomal RNAs and formation of the 60S ribosome. This chain is Ribosome biogenesis protein YTM1, found in Laccaria bicolor (strain S238N-H82 / ATCC MYA-4686) (Bicoloured deceiver).